The chain runs to 364 residues: Ribosomal RNA small subunit methyltransferase H (364 aa).

S-adenosyl-L-methionine contacts are provided by residues 55–57 (GGH), D75, F101, D122, and Q129. Residues 333-364 (LPPGGGAGFVKAGRVPGEPVRGTRAGSKGRRR) form a disordered region.

It belongs to the methyltransferase superfamily. RsmH family.

Its subcellular location is the cytoplasm. The enzyme catalyses cytidine(1402) in 16S rRNA + S-adenosyl-L-methionine = N(4)-methylcytidine(1402) in 16S rRNA + S-adenosyl-L-homocysteine + H(+). Specifically methylates the N4 position of cytidine in position 1402 (C1402) of 16S rRNA. This chain is Ribosomal RNA small subunit methyltransferase H, found in Bordetella bronchiseptica (strain ATCC BAA-588 / NCTC 13252 / RB50) (Alcaligenes bronchisepticus).